A 401-amino-acid chain; its full sequence is Dihydrolipoyllysine-residue succinyltransferase component of 2-oxoglutarate dehydrogenase complex (401 aa).

Residues 2 to 77 enclose the Lipoyl-binding domain; that stretch reads SVKIIVPSLG…AVGEEIGEIN (76 aa). An N6-lipoyllysine modification is found at Lys43. The region spanning 115 to 152 is the Peripheral subunit-binding (PSBD) domain; that stretch reads ILAPSVQKLVTENKLDPNNIKGTGRDGRITKGDVLETI. Catalysis depends on residues His372 and Asp376.

Belongs to the 2-oxoacid dehydrogenase family. Forms a 24-polypeptide structural core with octahedral symmetry. Part of the 2-oxoglutarate dehydrogenase (OGDH) complex composed of E1 (2-oxoglutarate dehydrogenase), E2 (dihydrolipoamide succinyltransferase) and E3 (dihydrolipoamide dehydrogenase); the complex contains multiple copies of the three enzymatic components (E1, E2 and E3). Requires (R)-lipoate as cofactor.

The catalysed reaction is N(6)-[(R)-dihydrolipoyl]-L-lysyl-[protein] + succinyl-CoA = N(6)-[(R)-S(8)-succinyldihydrolipoyl]-L-lysyl-[protein] + CoA. It participates in amino-acid degradation; L-lysine degradation via saccharopine pathway; glutaryl-CoA from L-lysine: step 6/6. Functionally, E2 component of the 2-oxoglutarate dehydrogenase (OGDH) complex which catalyzes the second step in the conversion of 2-oxoglutarate to succinyl-CoA and CO(2). The chain is Dihydrolipoyllysine-residue succinyltransferase component of 2-oxoglutarate dehydrogenase complex (sucB) from Rickettsia felis (strain ATCC VR-1525 / URRWXCal2) (Rickettsia azadi).